Here is a 537-residue protein sequence, read N- to C-terminus: CTP synthase (537 aa).

Positions Met-1–Ile-267 are amidoligase domain. CTP is bound at residue Ser-13. Residue Ser-13 coordinates UTP. Residue Ser-14–Ile-19 coordinates ATP. An L-glutamine-binding site is contributed by Tyr-54. Asp-71 serves as a coordination point for ATP. Positions 71 and 141 each coordinate Mg(2+). CTP is bound by residues Asp-148 to Glu-150, Lys-188 to Gln-193, and Lys-224. Residues Lys-188–Gln-193 and Lys-224 each bind UTP. One can recognise a Glutamine amidotransferase type-1 domain in the interval Thr-292 to Ser-534. Gly-354 provides a ligand contact to L-glutamine. The Nucleophile; for glutamine hydrolysis role is filled by Cys-381. L-glutamine contacts are provided by residues Leu-382–Gln-385, Glu-405, and Arg-462. Active-site residues include His-507 and Glu-509.

This sequence belongs to the CTP synthase family. Homotetramer.

The catalysed reaction is UTP + L-glutamine + ATP + H2O = CTP + L-glutamate + ADP + phosphate + 2 H(+). It catalyses the reaction L-glutamine + H2O = L-glutamate + NH4(+). The enzyme catalyses UTP + NH4(+) + ATP = CTP + ADP + phosphate + 2 H(+). It functions in the pathway pyrimidine metabolism; CTP biosynthesis via de novo pathway; CTP from UDP: step 2/2. Allosterically activated by GTP, when glutamine is the substrate; GTP has no effect on the reaction when ammonia is the substrate. The allosteric effector GTP functions by stabilizing the protein conformation that binds the tetrahedral intermediate(s) formed during glutamine hydrolysis. Inhibited by the product CTP, via allosteric rather than competitive inhibition. In terms of biological role, catalyzes the ATP-dependent amination of UTP to CTP with either L-glutamine or ammonia as the source of nitrogen. Regulates intracellular CTP levels through interactions with the four ribonucleotide triphosphates. The polypeptide is CTP synthase (Pelotomaculum thermopropionicum (strain DSM 13744 / JCM 10971 / SI)).